The following is a 154-amino-acid chain: NADPH-dependent 7-cyano-7-deazaguanine reductase (154 aa).

Residues 1–21 show a composition bias toward polar residues; sequence MPNTDVSSLSMLGHQTETASS. The segment at 1–26 is disordered; the sequence is MPNTDVSSLSMLGHQTETASSPEEAV. Cys52 acts as the Thioimide intermediate in catalysis. Catalysis depends on Asp59, which acts as the Proton donor. Substrate is bound by residues 74–76 and 93–94; these read VES and HE.

This sequence belongs to the GTP cyclohydrolase I family. QueF type 1 subfamily.

Its subcellular location is the cytoplasm. It carries out the reaction 7-aminomethyl-7-carbaguanine + 2 NADP(+) = 7-cyano-7-deazaguanine + 2 NADPH + 3 H(+). It functions in the pathway tRNA modification; tRNA-queuosine biosynthesis. Catalyzes the NADPH-dependent reduction of 7-cyano-7-deazaguanine (preQ0) to 7-aminomethyl-7-deazaguanine (preQ1). The sequence is that of NADPH-dependent 7-cyano-7-deazaguanine reductase from Rhizobium etli (strain ATCC 51251 / DSM 11541 / JCM 21823 / NBRC 15573 / CFN 42).